The primary structure comprises 201 residues: Small ribosomal subunit protein uS4 (201 aa).

The segment at 1–46 is disordered; that stretch reads MARYTGPRSRISRRFGEPVMGDSKALQKKNYAPGMHGRNKKRKQSE. One can recognise an S4 RNA-binding domain in the interval 92–151; it reads ARLDNTVYRLGIASSRRAARQLVIHKHIVVNGDVVNIPSYQLKPGDQLGVREKSKSIEAI.

It belongs to the universal ribosomal protein uS4 family. In terms of assembly, part of the 30S ribosomal subunit. Contacts protein S5. The interaction surface between S4 and S5 is involved in control of translational fidelity.

One of the primary rRNA binding proteins, it binds directly to 16S rRNA where it nucleates assembly of the body of the 30S subunit. Functionally, with S5 and S12 plays an important role in translational accuracy. The sequence is that of Small ribosomal subunit protein uS4 from Cytophaga hutchinsonii (strain ATCC 33406 / DSM 1761 / CIP 103989 / NBRC 15051 / NCIMB 9469 / D465).